Here is a 313-residue protein sequence, read N- to C-terminus: Phosphate import ATP-binding protein PstB 2 (313 aa).

Positions 1-33 (MSDSINTEPSTDTQTNGERTVETTSPSAETTAG) are enriched in polar residues. The disordered stretch occupies residues 1-40 (MSDSINTEPSTDTQTNGERTVETTSPSAETTAGESEEQVR). In terms of domain architecture, ABC transporter spans 54–308 (LSVENLDVWY…PESQRVEDYI (255 aa)). 86-93 (GPSGCGKS) serves as a coordination point for ATP.

This sequence belongs to the ABC transporter superfamily. Phosphate importer (TC 3.A.1.7) family. The complex is composed of two ATP-binding proteins (PstB), two transmembrane proteins (PstC and PstA) and a solute-binding protein (PstS).

It localises to the cell membrane. It catalyses the reaction phosphate(out) + ATP + H2O = ADP + 2 phosphate(in) + H(+). In terms of biological role, part of the ABC transporter complex PstSACB involved in phosphate import. Responsible for energy coupling to the transport system. In Haloarcula marismortui (strain ATCC 43049 / DSM 3752 / JCM 8966 / VKM B-1809) (Halobacterium marismortui), this protein is Phosphate import ATP-binding protein PstB 2.